A 381-amino-acid chain; its full sequence is tRNA (guanine(6)-N2)-methyltransferase (381 aa).

Residues 43 to 157 (KLIPKINYLS…FDELIVGIDT (115 aa)) form the THUMP domain. Residues 173-177 (HPAHL), 204-206 (SGT), aspartate 261, 289-290 (DA), and asparagine 306 each bind S-adenosyl-L-methionine.

Belongs to the methyltransferase superfamily.

It localises to the cytoplasm. The enzyme catalyses guanosine(6) in tRNA + S-adenosyl-L-methionine = N(2)-methylguanosine(6) in tRNA + S-adenosyl-L-homocysteine + H(+). S-adenosyl-L-methionine-dependent methyltransferase that catalyzes the methylation of the guanosine nucleotide at position 6 (m2G6) in tRNA(Cys). This chain is tRNA (guanine(6)-N2)-methyltransferase, found in Methanocaldococcus jannaschii (strain ATCC 43067 / DSM 2661 / JAL-1 / JCM 10045 / NBRC 100440) (Methanococcus jannaschii).